Reading from the N-terminus, the 162-residue chain is Transcription elongation factor GreB (162 aa).

Residues Gly-52–Ile-76 adopt a coiled-coil conformation.

It belongs to the GreA/GreB family. GreB subfamily.

In terms of biological role, necessary for efficient RNA polymerase transcription elongation past template-encoded arresting sites. The arresting sites in DNA have the property of trapping a certain fraction of elongating RNA polymerases that pass through, resulting in locked ternary complexes. Cleavage of the nascent transcript by cleavage factors such as GreA or GreB allows the resumption of elongation from the new 3'terminus. GreB releases sequences of up to 9 nucleotides in length. This chain is Transcription elongation factor GreB, found in Haemophilus ducreyi (strain 35000HP / ATCC 700724).